The following is an 86-amino-acid chain: Large ribosomal subunit protein bL27 (86 aa).

Residues 1-24 form a disordered region; it reads MATKKAGGSSRNGRDSAGRRLGVK.

The protein belongs to the bacterial ribosomal protein bL27 family.

This Rickettsia felis (strain ATCC VR-1525 / URRWXCal2) (Rickettsia azadi) protein is Large ribosomal subunit protein bL27.